We begin with the raw amino-acid sequence, 257 residues long: Zinc transporter ZupT (257 aa).

Helical transmembrane passes span 5-25, 32-52, 61-81, 109-129, 137-157, 171-191, 195-215, and 236-256; these read LILT…GVLG, LLAF…LMEM, GMSP…YFGL, AILL…ATFV, LGFG…LAVA, ILWA…AWLI, MISP…MVAL, and GVLC…TAGI. Fe(2+) is bound by residues N120 and E123. Positions 123 and 148 each coordinate Zn(2+). Fe(2+)-binding residues include N149, E152, and E181. E152 serves as a coordination point for Zn(2+).

It belongs to the ZIP transporter (TC 2.A.5) family. ZupT subfamily.

The protein resides in the cell inner membrane. The enzyme catalyses Zn(2+)(in) = Zn(2+)(out). Functionally, mediates zinc uptake. May also transport other divalent cations. In Shigella flexneri serotype 5b (strain 8401), this protein is Zinc transporter ZupT.